The following is a 48-amino-acid chain: MRVKINLKCSECGSLNYLTSKNKQNHPEKIQVPKFCPKDRKVTLHVES.

This sequence belongs to the bacterial ribosomal protein bL33 family.

This chain is Large ribosomal subunit protein bL33B, found in Streptococcus thermophilus (strain CNRZ 1066).